Here is a 320-residue protein sequence, read N- to C-terminus: Endolytic peptidoglycan transglycosylase RlpA (320 aa).

The protein belongs to the RlpA family.

Lytic transglycosylase with a strong preference for naked glycan strands that lack stem peptides. The chain is Endolytic peptidoglycan transglycosylase RlpA from Rickettsia typhi (strain ATCC VR-144 / Wilmington).